The primary structure comprises 360 residues: Protein pelota homolog (360 aa).

Belongs to the eukaryotic release factor 1 family. Pelota subfamily. In terms of assembly, monomer. It depends on a divalent metal cation as a cofactor.

Its subcellular location is the cytoplasm. In terms of biological role, may function in recognizing stalled ribosomes, interact with stem-loop structures in stalled mRNA molecules, and effect endonucleolytic cleavage of the mRNA. May play a role in the release non-functional ribosomes and degradation of damaged mRNAs. Has endoribonuclease activity. The chain is Protein pelota homolog from Hyperthermus butylicus (strain DSM 5456 / JCM 9403 / PLM1-5).